We begin with the raw amino-acid sequence, 24 residues long: AKDVRFGADVRALMLQGVDVLADA.

The protein belongs to the chaperonin (HSP60) family. In terms of assembly, forms a single seven-member ring complex, in tight association with the p63 protein. As to expression, testis.

It is found in the mitochondrion. Implicated in mitochondrial protein import and macromolecular assembly. May facilitate the correct folding of imported proteins. May also prevent misfolding and promote the refolding and proper assembly of unfolded polypeptides generated under stress conditions in the mitochondrial matrix. This chain is 60 kDa chaperonin, mitochondrial, found in Heliothis virescens (Tobacco budworm moth).